The sequence spans 111 residues: Large ribosomal subunit protein uL24 (111 aa).

Belongs to the universal ribosomal protein uL24 family. Part of the 50S ribosomal subunit.

Functionally, one of two assembly initiator proteins, it binds directly to the 5'-end of the 23S rRNA, where it nucleates assembly of the 50S subunit. In terms of biological role, one of the proteins that surrounds the polypeptide exit tunnel on the outside of the subunit. The polypeptide is Large ribosomal subunit protein uL24 (Streptococcus pneumoniae (strain Hungary19A-6)).